A 419-amino-acid chain; its full sequence is L-rhamnose isomerase (419 aa).

Positions 262, 294, and 296 each coordinate Mn(2+).

Belongs to the rhamnose isomerase family. In terms of assembly, homotetramer. Mn(2+) serves as cofactor.

Its subcellular location is the cytoplasm. It catalyses the reaction L-rhamnopyranose = L-rhamnulose. The protein operates within carbohydrate degradation; L-rhamnose degradation; glycerone phosphate from L-rhamnose: step 1/3. Catalyzes the interconversion of L-rhamnose and L-rhamnulose. In Escherichia coli O127:H6 (strain E2348/69 / EPEC), this protein is L-rhamnose isomerase.